Reading from the N-terminus, the 338-residue chain is Nicotinate-nucleotide--dimethylbenzimidazole phosphoribosyltransferase (338 aa).

Glu305 serves as the catalytic Proton acceptor.

It belongs to the CobT family.

The catalysed reaction is 5,6-dimethylbenzimidazole + nicotinate beta-D-ribonucleotide = alpha-ribazole 5'-phosphate + nicotinate + H(+). The protein operates within nucleoside biosynthesis; alpha-ribazole biosynthesis; alpha-ribazole from 5,6-dimethylbenzimidazole: step 1/2. Catalyzes the synthesis of alpha-ribazole-5'-phosphate from nicotinate mononucleotide (NAMN) and 5,6-dimethylbenzimidazole (DMB). In Rhizobium johnstonii (strain DSM 114642 / LMG 32736 / 3841) (Rhizobium leguminosarum bv. viciae), this protein is Nicotinate-nucleotide--dimethylbenzimidazole phosphoribosyltransferase.